The primary structure comprises 225 residues: UPF0758 protein Sden_0326 (225 aa).

In terms of domain architecture, MPN spans 102–224; the sequence is ILTNPDLTRD…IVSFAERGWL (123 aa). Positions 173, 175, and 186 each coordinate Zn(2+). A JAMM motif motif is present at residues 173-186; the sequence is HNHPSGIAEPSQAD.

Belongs to the UPF0758 family.

This is UPF0758 protein Sden_0326 from Shewanella denitrificans (strain OS217 / ATCC BAA-1090 / DSM 15013).